We begin with the raw amino-acid sequence, 500 residues long: ATP synthase subunit alpha, sodium ion specific (500 aa).

169–176 serves as a coordination point for ATP; it reads GDRQTGKT.

This sequence belongs to the ATPase alpha/beta chains family. In terms of assembly, F-type ATPases have 2 components, CF(1) - the catalytic core - and CF(0) - the membrane proton channel. CF(1) has five subunits: alpha(3), beta(3), gamma(1), delta(1), epsilon(1). CF(0) has three main subunits: a, b and c.

It is found in the cell membrane. The enzyme catalyses 4 Na(+)(in) + ATP + H2O = 4 Na(+)(out) + ADP + phosphate + H(+). In terms of biological role, produces ATP from ADP in the presence of a sodium ion gradient across the membrane. The alpha chain is a regulatory subunit. This chain is ATP synthase subunit alpha, sodium ion specific, found in Propionigenium modestum.